The primary structure comprises 1002 residues: Glutamate receptor ionotropic, NMDA 3B (1002 aa).

The N-terminal stretch at 1–24 is a signal peptide; it reads MESVRTLWLSVALALAVGSRVVRG. Over 25–574 the chain is Extracellular; the sequence is HPQPCRVPTR…PIGAFMWPLH (550 aa). Asparagine 69, asparagine 212, asparagine 344, asparagine 451, and asparagine 465 each carry an N-linked (GlcNAc...) asparagine glycan. 2 disulfide bridges follow: cysteine 439/cysteine 475 and cysteine 445/cysteine 476. Residues serine 531, serine 533, and arginine 538 each coordinate glycine. 2 residues coordinate D-serine: serine 533 and arginine 538. A helical transmembrane segment spans residues 575-594; that stretch reads WSMWVGVFAALHLTALFLTL. Topologically, residues 595 to 615 are cytoplasmic; the sequence is YEWRSPYGLTPRGRNRGTVFS. An intramembrane region (discontinuously helical) is located at residues 616–627; the sequence is YSSALNLCYAIL. Residues 628-641 lie on the Cytoplasmic side of the membrane; that stretch reads FGRTVSSKTPKCPT. A helical transmembrane segment spans residues 642-661; it reads GRFLMNLWAIFCLLVLSSYT. The Extracellular segment spans residues 662–832; the sequence is ANLAAVMVGD…TLQMGVYHFS (171 aa). Residue serine 701 participates in glycine binding. D-serine is bound by residues serine 701, alanine 702, and aspartate 745. Aspartate 745 is a glycine binding site. Asparagine 786 carries N-linked (GlcNAc...) asparagine glycosylation. The helical transmembrane segment at 833 to 848 threads the bilayer; sequence GLFVLLCLGLGSALLT. Over 849–1002 the chain is Cytoplasmic; that stretch reads SLGEHVFYRL…RLLHAAPAES (154 aa). The segment at 882–910 is disordered; the sequence is ALNTGPPEGQQERAEQERSGPKDELPATD. Basic and acidic residues predominate over residues 891 to 906; the sequence is QQERAEQERSGPKDEL. Residues 944-985 are a coiled coil; the sequence is LCSNGPGLQAELRELELRIEAARERLRSALLRRGELRALLGD. Positions 951–984 are involved in the trafficking and surface expression of NMDARs; that stretch reads LQAELRELELRIEAARERLRSALLRRGELRALLG.

Belongs to the glutamate-gated ion channel (TC 1.A.10.1) family. NR3B/GRIN3B subfamily. As to quaternary structure, forms heterotetrameric channels that contain at least two GluN1 subunits and at least a combination of one GluN2 and one GluN3 subunits (in vitro). Forms heterotetrameric channels composed of two GluN1/zeta subunits (GRIN1), and two identical GluN3 subunits (GRIN3A or GRIN3B) (in vitro). Does not form functional homomeric channels. In terms of tissue distribution, expressed in the hippocampus, the corpus callosum, in the facial and trigeminal nuclei of the brainstem and the ventral horn of the spinal cord.

It is found in the cell membrane. The protein resides in the postsynaptic cell membrane. The catalysed reaction is Ca(2+)(in) = Ca(2+)(out). It catalyses the reaction Na(+)(in) = Na(+)(out). Excitatory glycine receptors are inhibited by D-serine at a concentrion of 100uM. In terms of biological role, component of a non-conventional N-methyl-D-aspartate (NMDA) receptors (NMDARs) that function as heterotetrameric, ligand-gated cation channels with low calcium permeability and low voltage-dependent block by Mg(2+). Forms glutamatergic receptor complexes with GluN1 and GluN2 subunits which are activated by glycine binding to the GluN1 and GluN3 subunits and L-glutamate binding to GluN2 subunits. Forms excitatory glycinergic receptor complexes with GluN1 alone which are activated by glycine binding to the GluN1 and GluN3 subunits. GluN3B subunit also binds D-serine and, in the absence of glycine, activates glycinergic receptor complexes, but with lower efficacy than glycine. Each GluN3 subunit confers differential attributes to channel properties, including activation, deactivation and desensitization kinetics, pH sensitivity, Ca2(+) permeability, and binding to allosteric modulators. This Rattus norvegicus (Rat) protein is Glutamate receptor ionotropic, NMDA 3B.